The sequence spans 718 residues: D-(-)-3-hydroxybutyrate oligomer hydrolase (718 aa).

Ser-320 functions as the Charge relay system in the catalytic mechanism.

The protein belongs to the D-(-)-3-hydroxybutyrate oligomer hydrolase family.

It is found in the cytoplasm. The catalysed reaction is (3R)-hydroxybutanoate dimer + H2O = 2 (R)-3-hydroxybutanoate + H(+). The protein operates within lipid metabolism; butanoate metabolism. With respect to regulation, inhibited by diisopropylfluorophosphate (DFP). In terms of biological role, participates in the degradation of poly-3-hydroxybutyrate (PHB). It works downstream of poly(3-hydroxybutyrate) depolymerase, hydrolyzing D(-)-3-hydroxybutyrate oligomers of various length (3HB-oligomers) into 3HB-monomers. Seems to have also poly(3-hydroxybutyrate) depolymerase activity since it is able to release 3HB-monomers from artificial amorphous PHB. This Cupriavidus necator (strain ATCC 17699 / DSM 428 / KCTC 22496 / NCIMB 10442 / H16 / Stanier 337) (Ralstonia eutropha) protein is D-(-)-3-hydroxybutyrate oligomer hydrolase (phaZ2).